A 223-amino-acid polypeptide reads, in one-letter code: Ribose-5-phosphate isomerase A (223 aa).

Residues 32–35, 85–88, and 98–101 contribute to the substrate site; these read TGST, DGAD, and KGGG. Glu107 acts as the Proton acceptor in catalysis. A substrate-binding site is contributed by Lys125.

Belongs to the ribose 5-phosphate isomerase family. As to quaternary structure, homodimer.

The enzyme catalyses aldehydo-D-ribose 5-phosphate = D-ribulose 5-phosphate. Its pathway is carbohydrate degradation; pentose phosphate pathway; D-ribose 5-phosphate from D-ribulose 5-phosphate (non-oxidative stage): step 1/1. Its function is as follows. Catalyzes the reversible conversion of ribose-5-phosphate to ribulose 5-phosphate. The polypeptide is Ribose-5-phosphate isomerase A (Pseudomonas savastanoi pv. phaseolicola (strain 1448A / Race 6) (Pseudomonas syringae pv. phaseolicola (strain 1448A / Race 6))).